A 432-amino-acid chain; its full sequence is Adenylosuccinate synthetase (432 aa).

GTP-binding positions include 13–19 (GDEGKGK) and 41–43 (GHT). Asp-14 acts as the Proton acceptor in catalysis. Positions 14 and 41 each coordinate Mg(2+). IMP-binding positions include 14–17 (DEGK), 39–42 (NAGH), Thr-130, Arg-144, Gln-225, Thr-240, and Arg-304. His-42 functions as the Proton donor in the catalytic mechanism. 300-306 (AVTGRPR) is a substrate binding site. GTP-binding positions include Arg-306, 332 to 334 (KLD), and 415 to 417 (STG).

Belongs to the adenylosuccinate synthetase family. In terms of assembly, homodimer. Mg(2+) serves as cofactor.

It localises to the cytoplasm. It catalyses the reaction IMP + L-aspartate + GTP = N(6)-(1,2-dicarboxyethyl)-AMP + GDP + phosphate + 2 H(+). It participates in purine metabolism; AMP biosynthesis via de novo pathway; AMP from IMP: step 1/2. Functionally, plays an important role in the de novo pathway of purine nucleotide biosynthesis. Catalyzes the first committed step in the biosynthesis of AMP from IMP. This chain is Adenylosuccinate synthetase, found in Actinobacillus pleuropneumoniae serotype 5b (strain L20).